The primary structure comprises 204 residues: Transcriptional regulator GfcR (204 aa).

Belongs to the purine/pyrimidine phosphoribosyltransferase family. GfcR subfamily.

In Methanosarcina mazei (strain ATCC BAA-159 / DSM 3647 / Goe1 / Go1 / JCM 11833 / OCM 88) (Methanosarcina frisia), this protein is Transcriptional regulator GfcR.